Reading from the N-terminus, the 501-residue chain is Cilia- and flagella-associated protein 45 (501 aa).

The stretch at 75–114 forms a coiled coil; that stretch reads MTAEDVAAAKREAEAKREQLQAVSKARKEKMLKLEEEAKK.

This sequence belongs to the CFAP45 family.

The protein localises to the cell projection. The protein resides in the cilium. It localises to the flagellum. This is Cilia- and flagella-associated protein 45 from Chlamydomonas reinhardtii (Chlamydomonas smithii).